The following is a 70-amino-acid chain: MPGIKVHPNESFDEAYRKFKKQVDRNLVVTEVRARRFFEPMTEIRKKQKISARKKMLKRLYMLRRYESRL.

The protein belongs to the bacterial ribosomal protein bS21 family.

The protein is Small ribosomal subunit protein bS21 of Campylobacter jejuni subsp. jejuni serotype O:23/36 (strain 81-176).